The primary structure comprises 182 residues: MNLSNHFLVAMPDMEDAFFSQSVVYICKHDEDGALGIAINKPSPITMDMIFSATGKNIPMRMQHDSVMMGGPVQVDRGYVVHTPIGNWQSSIGVSDNIALTSSRDVIENISREGAVDKALISIGYSSWGKGQLERELADNAWLTVPADEHILFDIPYEHRYAAAFAKLGIDPLALHGKAGHA.

It belongs to the UPF0301 (AlgH) family.

This chain is UPF0301 protein NMCC_1249, found in Neisseria meningitidis serogroup C (strain 053442).